The following is a 597-amino-acid chain: Miltiradiene synthase KSL2, chloroplastic (597 aa).

A chloroplast-targeting transit peptide spans 1 to 51 (MSLAFNLRAIPFSGHTIQSRRGLFPVHESPMITTKPFVAVKCSLTTSTDLM). Mg(2+)-binding residues include Asp-329, Asp-333, Asn-473, and Glu-481. Positions 329-333 (DDFFD) match the DDXXD motif motif.

The protein belongs to the terpene synthase family. The cofactor is Mg(2+).

The protein resides in the plastid. It localises to the chloroplast. The catalysed reaction is (+)-copalyl diphosphate = miltiradiene + diphosphate. It functions in the pathway secondary metabolite biosynthesis; terpenoid biosynthesis. In terms of biological role, involved in the biosynthesis of ent-kaurene diterpenoids natural products such as oridonin, miltiradiene, eriocalyxin B and nezukol, known to exhibit antitumor, anti-inflammatory and antibacterial activities. Catalyzes the conversion of (+)-copalyl diphosphate ((+)-CPP) to miltiradiene. The protein is Miltiradiene synthase KSL2, chloroplastic of Isodon japonicus (Scutellaria japonica).